An 87-amino-acid polypeptide reads, in one-letter code: Large ribosomal subunit protein bL31B (87 aa).

The protein belongs to the bacterial ribosomal protein bL31 family. Type B subfamily. In terms of assembly, part of the 50S ribosomal subunit.

This Pseudomonas paraeruginosa (strain DSM 24068 / PA7) (Pseudomonas aeruginosa (strain PA7)) protein is Large ribosomal subunit protein bL31B.